The chain runs to 211 residues: N-(5'-phosphoribosyl)anthranilate isomerase (211 aa).

This sequence belongs to the TrpF family.

It carries out the reaction N-(5-phospho-beta-D-ribosyl)anthranilate = 1-(2-carboxyphenylamino)-1-deoxy-D-ribulose 5-phosphate. Its pathway is amino-acid biosynthesis; L-tryptophan biosynthesis; L-tryptophan from chorismate: step 3/5. The chain is N-(5'-phosphoribosyl)anthranilate isomerase from Nitrosomonas europaea (strain ATCC 19718 / CIP 103999 / KCTC 2705 / NBRC 14298).